The primary structure comprises 183 residues: Acireductone dioxygenase (183 aa).

The Fe(2+) site is built by H99, H101, E105, and H144. H99, H101, E105, and H144 together coordinate Ni(2+).

It belongs to the acireductone dioxygenase (ARD) family. Monomer. Fe(2+) is required as a cofactor. Ni(2+) serves as cofactor.

The catalysed reaction is 1,2-dihydroxy-5-(methylsulfanyl)pent-1-en-3-one + O2 = 3-(methylsulfanyl)propanoate + CO + formate + 2 H(+). The enzyme catalyses 1,2-dihydroxy-5-(methylsulfanyl)pent-1-en-3-one + O2 = 4-methylsulfanyl-2-oxobutanoate + formate + 2 H(+). Its pathway is amino-acid biosynthesis; L-methionine biosynthesis via salvage pathway; L-methionine from S-methyl-5-thio-alpha-D-ribose 1-phosphate: step 5/6. Its function is as follows. Catalyzes 2 different reactions between oxygen and the acireductone 1,2-dihydroxy-3-keto-5-methylthiopentene (DHK-MTPene) depending upon the metal bound in the active site. Fe-containing acireductone dioxygenase (Fe-ARD) produces formate and 2-keto-4-methylthiobutyrate (KMTB), the alpha-ketoacid precursor of methionine in the methionine recycle pathway. Ni-containing acireductone dioxygenase (Ni-ARD) produces methylthiopropionate, carbon monoxide and formate, and does not lie on the methionine recycle pathway. The polypeptide is Acireductone dioxygenase (Microcystis aeruginosa (strain NIES-843 / IAM M-2473)).